The chain runs to 1370 residues: DNA-directed RNA polymerase subunit beta (1370 aa).

The protein belongs to the RNA polymerase beta chain family. As to quaternary structure, the RNAP catalytic core consists of 2 alpha, 1 beta, 1 beta' and 1 omega subunit. When a sigma factor is associated with the core the holoenzyme is formed, which can initiate transcription.

The enzyme catalyses RNA(n) + a ribonucleoside 5'-triphosphate = RNA(n+1) + diphosphate. Its function is as follows. DNA-dependent RNA polymerase catalyzes the transcription of DNA into RNA using the four ribonucleoside triphosphates as substrates. This Geobacter metallireducens (strain ATCC 53774 / DSM 7210 / GS-15) protein is DNA-directed RNA polymerase subunit beta.